Reading from the N-terminus, the 337-residue chain is Glycerol-3-phosphate dehydrogenase [NAD(P)+] (337 aa).

NADPH contacts are provided by Trp11, Arg30, and Lys113. 3 residues coordinate sn-glycerol 3-phosphate: Lys113, Gly141, and Ser143. Ala145 is an NADPH binding site. Residues Lys196, Asp249, Ser259, Arg260, and Asn261 each coordinate sn-glycerol 3-phosphate. Lys196 (proton acceptor) is an active-site residue. Residue Arg260 coordinates NADPH. 2 residues coordinate NADPH: Val284 and Glu286.

It belongs to the NAD-dependent glycerol-3-phosphate dehydrogenase family.

The protein resides in the cytoplasm. It catalyses the reaction sn-glycerol 3-phosphate + NAD(+) = dihydroxyacetone phosphate + NADH + H(+). The catalysed reaction is sn-glycerol 3-phosphate + NADP(+) = dihydroxyacetone phosphate + NADPH + H(+). It functions in the pathway membrane lipid metabolism; glycerophospholipid metabolism. Its function is as follows. Catalyzes the reduction of the glycolytic intermediate dihydroxyacetone phosphate (DHAP) to sn-glycerol 3-phosphate (G3P), the key precursor for phospholipid synthesis. This is Glycerol-3-phosphate dehydrogenase [NAD(P)+] from Leptothrix cholodnii (strain ATCC 51168 / LMG 8142 / SP-6) (Leptothrix discophora (strain SP-6)).